The chain runs to 358 residues: C-X-C chemokine receptor type 4-B (358 aa).

The segment at 1–25 (MDGFSGGIDINIFDGNSTENGSGDF) is important for chemokine binding and signaling. At 1–44 (MDGFSGGIDINIFDGNSTENGSGDFEDFIEPCFMQENSDFNRIF) the chain is on the extracellular side. Residues Asn16 and Asn20 are each glycosylated (N-linked (GlcNAc...) asparagine). Cystine bridges form between Cys32/Cys281 and Cys113/Cys190. Residues 45 to 67 (LPTIYSFIFLLGIIGNGLVVVVM) form a helical membrane-spanning segment. Residues 68-81 (GYQKKSRTMTDKYR) are Cytoplasmic-facing. A helical membrane pass occupies residues 82–103 (LHLSVADLLFVFTLPFWSVDAA). A chemokine binding region spans residues 98-101 (WSVD). Residues 104-114 (IGWYFKEFLCK) lie on the Extracellular side of the membrane. Residues 115–134 (AVHVIYTVNLYSSVLILAFI) traverse the membrane as a helical segment. Positions 117-121 (HVIYT) are chemokine binding. Topologically, residues 135–158 (SLDRYLAIVHATNSQGSRKMLADK) are cytoplasmic. Residues 139–151 (YLAIVHATNSQGS) form an involved in dimerization; when bound to chemokine region. A helical membrane pass occupies residues 159–178 (VVYAGVWLPALLLTVPDLVF). The Extracellular segment spans residues 179–202 (ASVSNENGQFVCDRIYPIDNRETW). The interval 190 to 194 (CDRIY) is chemokine binding, important for signaling. The helical transmembrane segment at 203–223 (TVGFRFLHITVGLILPGLIIL) threads the bilayer. Over 224–248 (VCYCVIISKLSHSKGHQKRKALKTT) the chain is Cytoplasmic. A helical transmembrane segment spans residues 249 to 268 (VILILAFFACWLPYYVCLTT). The Extracellular portion of the chain corresponds to 269 to 289 (DTFMMLGLVKADCIWENTLHK). A helical transmembrane segment spans residues 290-309 (AISITEALAFFHCCLNPILY). At 310-358 (AFLGAKFKKSAQNAFTSVSRGSSLKILSKKRAGLSSVSTESESSSFHSS) the chain is on the cytoplasmic side. The disordered stretch occupies residues 338 to 358 (KKRAGLSSVSTESESSSFHSS). A compositionally biased stretch (low complexity) spans 344 to 358 (SSVSTESESSSFHSS).

It belongs to the G-protein coupled receptor 1 family. As to quaternary structure, monomer. Can form dimers. In terms of processing, sulfation is required for efficient binding of cxcl12/sdf-1alpha and promotes its dimerization. O- and N-glycosylated.

The protein resides in the cell membrane. The protein localises to the cytoplasm. Its subcellular location is the nucleus. It localises to the early endosome. It is found in the late endosome. The protein resides in the lysosome. Functionally, receptor for the C-X-C chemokine cxcl12/sdf-1. Transduces a signal by increasing the intracellular level of calcium ions. Signaling with cxcl12/sdf-1 mediates the directional movement of mesodermal cells during gastrulation. May play a role in the migration of embryonic presumptive primordial germ cells (pPGCs). May also be involved in regulating migration of hematopoietic stem cells into the larval liver. The polypeptide is C-X-C chemokine receptor type 4-B (cxcr4-b) (Xenopus laevis (African clawed frog)).